The following is a 201-amino-acid chain: MSRYRGPRFKKIRRLGALPGLTSKSPKAGSDLRNQLRSGKRSQYRIRLEEKQKLRFHYGLTERQLLKYVRIAGKAKGSTGQVLLQLLEMRLDNILFRLGMASTIPGARQLVNHRHILVNGRIVDIPSYRCKPRDIITTRDEQKSRALIQNYLDSSSHEELPKHLTLHSFQYKGLVNQIIDSKWVGLQINELLVVEYYSRQT.

Residues 19–38 (PGLTSKSPKAGSDLRNQLRS) form a disordered region. The 61-residue stretch at 89–149 (MRLDNILFRL…DEQKSRALIQ (61 aa)) folds into the S4 RNA-binding domain.

It belongs to the universal ribosomal protein uS4 family. Part of the 30S ribosomal subunit. Contacts protein S5. The interaction surface between S4 and S5 is involved in control of translational fidelity.

Its subcellular location is the plastid. It is found in the chloroplast. Functionally, one of the primary rRNA binding proteins, it binds directly to 16S rRNA where it nucleates assembly of the body of the 30S subunit. In terms of biological role, with S5 and S12 plays an important role in translational accuracy. This chain is Small ribosomal subunit protein uS4c (rps4), found in Platanus occidentalis (Sycamore).